The sequence spans 152 residues: Nucleoside diphosphate kinase (152 aa).

ATP contacts are provided by lysine 11, phenylalanine 59, arginine 87, threonine 93, arginine 104, and asparagine 114. Histidine 117 acts as the Pros-phosphohistidine intermediate in catalysis.

It belongs to the NDK family. As to quaternary structure, homotetramer. The cofactor is Mg(2+).

Its subcellular location is the cytoplasm. The enzyme catalyses a 2'-deoxyribonucleoside 5'-diphosphate + ATP = a 2'-deoxyribonucleoside 5'-triphosphate + ADP. It catalyses the reaction a ribonucleoside 5'-diphosphate + ATP = a ribonucleoside 5'-triphosphate + ADP. In terms of biological role, major role in the synthesis of nucleoside triphosphates other than ATP. The ATP gamma phosphate is transferred to the NDP beta phosphate via a ping-pong mechanism, using a phosphorylated active-site intermediate. In Prochlorococcus marinus (strain MIT 9313), this protein is Nucleoside diphosphate kinase.